Consider the following 418-residue polypeptide: Vasopressin V1a receptor (418 aa).

A compositionally biased stretch (low complexity) spans 1 to 15 (MRFSGSPSPGPSNSS). The interval 1–20 (MRFSGSPSPGPSNSSRWWPL) is disordered. The Extracellular portion of the chain corresponds to 1-51 (MRFSGSPSPGPSNSSRWWPLDAGDANTSGDLAGLGEDGGPQADTRNEELAK). Asn-13 and Asn-26 each carry an N-linked (GlcNAc...) asparagine glycan. A helical transmembrane segment spans residues 52–75 (LEIAVLAVIFVVAVLGNSSVLLAL). Topologically, residues 76–87 (HRTPRKTSRMHL) are cytoplasmic. A helical transmembrane segment spans residues 88-109 (FIRHLSLADLAVAFFQVLPQLG). The Extracellular segment spans residues 110 to 124 (WDITYRFRGPDGLCR). Cysteines 123 and 202 form a disulfide. The chain crosses the membrane as a helical span at residues 125 to 146 (VVKHMQVFAMFASAYMLVVMTA). Topologically, residues 147–167 (DRYIAVCHPLKTLQQPARRSR) are cytoplasmic. A helical transmembrane segment spans residues 168 to 189 (LMIAAAWVLSFVLSTPQYFVFS). Residues 190–217 (MVEVSNVTKTYDCWANFIHPWGLPAYVT) are Extracellular-facing. An N-linked (GlcNAc...) asparagine glycan is attached at Asn-195. A helical transmembrane segment spans residues 218 to 238 (WMTGSVFVAPVVILGTCYGFI). Topologically, residues 239 to 293 (CYHIWRKVRGKTAGRQGGPAEGAGESALYRGVLHARCVSSVKTISRAKIRTVKMT) are cytoplasmic. Residues 294–313 (FVIVTAYIVCWAPFFIIQMW) traverse the membrane as a helical segment. The Extracellular portion of the chain corresponds to 314-331 (SAWDKNFSWVESENPATA). N-linked (GlcNAc...) asparagine glycosylation is present at Asn-319. A helical membrane pass occupies residues 332–351 (IPALLASLNSCCNPWIYMFF). Topologically, residues 352–418 (SGHLLQDCAQ…KSIKFIPVST (67 aa)) are cytoplasmic. 2 S-palmitoyl cysteine lipidation sites follow: Cys-365 and Cys-366. Residues 377-418 (GSDSMSRRQTSFTNNRSPTNSMGTWKDSPKSSKSIKFIPVST) are disordered. Polar residues predominate over residues 383–399 (RRQTSFTNNRSPTNSMG). Ser-404 is modified (phosphoserine).

It belongs to the G-protein coupled receptor 1 family. Vasopressin/oxytocin receptor subfamily.

It localises to the cell membrane. In terms of biological role, receptor for arginine vasopressin. The activity of this receptor is mediated by G proteins which activate a phosphatidyl-inositol-calcium second messenger system. This is Vasopressin V1a receptor (AVPR1A) from Ovis aries (Sheep).